Reading from the N-terminus, the 199-residue chain is Protein OPI10 homolog (199 aa).

The protein belongs to the OPI10 family.

This Aedes aegypti (Yellowfever mosquito) protein is Protein OPI10 homolog.